Here is a 1143-residue protein sequence, read N- to C-terminus: Probable ATP-dependent RNA helicase DHX34 (1143 aa).

2 disordered regions span residues 1–24 (MPPP…EEEA) and 75–94 (TSRK…PALA). The segment covering 76–85 (SRKEEKDPGQ) has biased composition (basic and acidic residues). The 161-residue stretch at 172–332 (LQTLKEHQVV…FSNAPVVQVP (161 aa)) folds into the Helicase ATP-binding domain. 185-192 (GDTGCGKS) is a binding site for ATP. The short motif at 279 to 282 (DEVH) is the DEAH box element. Residues 368–536 (SIDHKYPPEE…SLVLQMKSMS (169 aa)) form the Helicase C-terminal domain. The segment at 701–955 (QAAQVGDSYS…LRARWESALD (255 aa)) is negatively regulates interaction with UPF1. The interval 724–766 (LKRQHEEGAGRRRKVLRLQEEQDGGSSDEDRAGPAPPGASDGV) is disordered. Ser-749 and Ser-750 each carry phosphoserine. Positions 810-1143 (PQLAVPDAFN…EVLRHRKQHV (334 aa)) are required for phosphorylation of UPF1. Not required for interaction with UPF1. Residues 957–1143 (QLAHQAQQQL…EVLRHRKQHV (187 aa)) are required for the interaction with SMG1 and subsequent phosphorylation of UPF1.

It belongs to the DEAD box helicase family. DEAH subfamily. Forms a complex with RUVBL1 and RUVBL2. Part of a complex composed of SMG1, DHX34 and UPF1; within the complex DHX34 acts as a scaffolding protein to facilitate SMG1 phosphorylation of UPF1. Interacts with UPF1, MOV10, EIF4A3, XRN2, SMG6, SMG7, SMG9, UPF3A, UPF3B, CASC3/MLN51, XRN1, DIS3 and DCP1A; the interactions are RNA-independent. Interacts with NCBP1/CPB80; the interaction is RNA-dependent. Interacts (via C-terminus) with SMG1; the interaction is RNA-independent. Expressed in whole blood, testis and spleen. Also expressed in the brain.

It carries out the reaction ATP + H2O = ADP + phosphate + H(+). Its function is as follows. Probable ATP-binding RNA helicase required for nonsense-mediated decay (NMD) degradation of mRNA transcripts containing premature stop codons. Promotes the phosphorylation of UPF1 along with its interaction with key NMD pathway proteins UPF2 and EIF4A3. Interaction with the RUVBL1-RUVBL2 complex results in loss of nucleotide binding ability and ATP hydrolysis of the complex. Negatively regulates the nucleotide binding ability and ATP hydrolysis of the RUVBL1-RUVBL2 complex via induction of N-terminus conformation changes of the RUVBL2 subunits. This Homo sapiens (Human) protein is Probable ATP-dependent RNA helicase DHX34.